The primary structure comprises 357 residues: Vomeronasal type-1 receptor 5 (357 aa).

Residues 1–3 (MLK) are Extracellular-facing. Residues 4–24 (LVIIENMAEIMLFSLDLLLFS) traverse the membrane as a helical segment. At 25 to 52 (TDILCFNFPSKMIKLPGFITIQIFFYPQ) the chain is on the cytoplasmic side. The helical transmembrane segment at 53–73 (ASFGISANTILFLFHIFTFVF) threads the bilayer. The Extracellular portion of the chain corresponds to 74 to 81 (SHRSKSID). A helical transmembrane segment spans residues 82-102 (MIISHLSLIHILLLFTQAILV). The Cytoplasmic portion of the chain corresponds to 103–130 (SLDFFGSQNTQDDLRCKVIVFLNKVMRG). Residues 131–151 (LSICTPCLLNVLQAIISPSIF) form a helical membrane-spanning segment. Over 152-163 (SLAKLKHPSASH) the chain is Extracellular. The chain crosses the membrane as a helical span at residues 164–184 (ILGFFLFSWVLNMFIGVIFCC). At 185–269 (TLWLPPVKWG…PVSPVKRASQ (85 aa)) the chain is on the cytoplasmic side. Residues 270–290 (TILLLVSFVFIYWVDFMFSFS) traverse the membrane as a helical segment. The Extracellular segment spans residues 291-300 (RGVTWINDSL). An N-linked (GlcNAc...) asparagine glycan is attached at asparagine 297. Residues 301 to 321 (LVWFQVIVANSYATISPLMLI) form a helical membrane-spanning segment. Residues 322 to 357 (YADNQIFKTLQMLWFKYLSPPKLMLKFNRQCGSTKK) lie on the Cytoplasmic side of the membrane.

It belongs to the G-protein coupled receptor 1 family.

It localises to the cell membrane. Putative pheromone receptor. The sequence is that of Vomeronasal type-1 receptor 5 (VN1R5) from Gorilla gorilla gorilla (Western lowland gorilla).